Here is a 143-residue protein sequence, read N- to C-terminus: MQHRGFLLLTLLALLALTSAVAKKKDKVKKGGPGSECAEWAWGPCTPSSKDCGVGFREGTCGAQTQRIRCRVPCNWKKEFGADCKYKFENWGACDGGTGTKVRQGTLKKARYNAQCQETIRVTKPCTPKTKAKAKAKKGKGKD.

The first 20 residues, 1 to 20 (MQHRGFLLLTLLALLALTSA), serve as a signal peptide directing secretion. Intrachain disulfides connect Cys37/Cys61, Cys45/Cys70, Cys52/Cys74, Cys84/Cys116, and Cys94/Cys126.

It belongs to the pleiotrophin family. Homodimer. Interacts with ALK. Interacts with LRP1; promotes neuronal survival. Interacts with LRP2. Interacts with NCAM1. Interacts (via C-terminal) with PTPRZ1 (via chondroitin sulfate chains); this interaction is inhibited by PTN; this interaction promotes neuronal migration. Interacts with NCL; this interaction promotes NCL clustering and lateral movements of this complex into lipid rafts leading to MDK internalization. Interacts with LRP6 and LRP8: this interaction is calcium dependent. Interacts with ITGA4. Interacts with ITGA6. Interacts with ITGB1. Interacts with ITGA4:ITGB1 complex; this interaction mediates MDK-induced osteoblast cells migration through PXN phosphorylation. Interacts with ITGA6:ITGB1 complex; this interaction mediates MDK-induced neurite outgrowth. Interacts with NOTCH2; this interaction mediates a nuclear accumulation of NOTCH2 and therefore activation of NOTCH2 signaling leading to interaction between HES1 and STAT3. Interacts with GPC2 (via heparan sulfate chain); this interaction is inhibited by heparin followed by chondroitin sulfate E; this interaction induces GPC2 clustering through heparan sulfate chain; this interaction induces neuronal cell adhesion and neurite outgrowth. Interacts with SDC3; this interaction induces SDC3 clustering; this interaction induces neuronal cell adhesion and neurite outgrowth. Interacts with SDC1. Interacts with CSPG5; this interaction promotes elongation of oligodendroglial precursor-like cells. In terms of tissue distribution, expressed in various tumor cell lines. In insulinoma tissue predominantly expressed in precancerous lesions.

The protein localises to the secreted. Its function is as follows. Secreted protein that functions as a cytokine and growth factor and mediates its signal through cell-surface proteoglycan and non-proteoglycan receptors. Binds cell-surface proteoglycan receptors via their chondroitin sulfate (CS) groups. Thereby regulates many processes like inflammatory response, cell proliferation, cell adhesion, cell growth, cell survival, tissue regeneration, cell differentiation and cell migration. Participates in inflammatory processes by exerting two different activities. Firstly, mediates neutrophils and macrophages recruitment to the sites of inflammation both by direct action by cooperating namely with ITGB2 via LRP1 and by inducing chemokine expression. This inflammation can be accompanied by epithelial cell survival and smooth muscle cell migration after renal and vessel damage, respectively. Secondly, suppresses the development of tolerogenic dendric cells thereby inhibiting the differentiation of regulatory T cells and also promote T cell expansion through NFAT signaling and Th1 cell differentiation. Promotes tissue regeneration after injury or trauma. After heart damage negatively regulates the recruitment of inflammatory cells and mediates cell survival through activation of anti-apoptotic signaling pathways via MAPKs and AKT pathways through the activation of angiogenesis. Also facilitates liver regeneration as well as bone repair by recruiting macrophage at trauma site and by promoting cartilage development by facilitating chondrocyte differentiation. Plays a role in brain by promoting neural precursor cells survival and growth through interaction with heparan sulfate proteoglycans. Binds PTPRZ1 and promotes neuronal migration and embryonic neurons survival. Binds SDC3 or GPC2 and mediates neurite outgrowth and cell adhesion. Binds chondroitin sulfate E and heparin leading to inhibition of neuronal cell adhesion induced by binding with GPC2. Binds CSPG5 and promotes elongation of oligodendroglial precursor-like cells. Also binds ITGA6:ITGB1 complex; this interaction mediates MDK-induced neurite outgrowth. Binds LRP1; promotes neuronal survival. Binds ITGA4:ITGB1 complex; this interaction mediates MDK-induced osteoblast cells migration through PXN phosphorylation. Binds anaplastic lymphoma kinase (ALK) which induces ALK activation and subsequent phosphorylation of the insulin receptor substrate (IRS1), followed by the activation of mitogen-activated protein kinase (MAPK) and PI3-kinase, and the induction of cell proliferation. Promotes epithelial to mesenchymal transition through interaction with NOTCH2. During arteriogenesis, plays a role in vascular endothelial cell proliferation by inducing VEGFA expression and release which in turn induces nitric oxide synthase expression. Moreover activates vasodilation through nitric oxide synthase activation. Negatively regulates bone formation in response to mechanical load by inhibiting Wnt/beta-catenin signaling in osteoblasts. In addition plays a role in hippocampal development, working memory, auditory response, early fetal adrenal gland development and the female reproductive system. In Homo sapiens (Human), this protein is Midkine.